The following is a 310-amino-acid chain: Aspartate carbamoyltransferase catalytic subunit (310 aa).

Positions 58 and 59 each coordinate carbamoyl phosphate. Lys87 contributes to the L-aspartate binding site. Carbamoyl phosphate is bound by residues Arg108, His136, and Gln139. 2 residues coordinate L-aspartate: Arg169 and Arg229. Carbamoyl phosphate is bound by residues Leu268 and Pro269.

Belongs to the aspartate/ornithine carbamoyltransferase superfamily. ATCase family. In terms of assembly, heterododecamer (2C3:3R2) of six catalytic PyrB chains organized as two trimers (C3), and six regulatory PyrI chains organized as three dimers (R2).

It catalyses the reaction carbamoyl phosphate + L-aspartate = N-carbamoyl-L-aspartate + phosphate + H(+). It functions in the pathway pyrimidine metabolism; UMP biosynthesis via de novo pathway; (S)-dihydroorotate from bicarbonate: step 2/3. Its function is as follows. Catalyzes the condensation of carbamoyl phosphate and aspartate to form carbamoyl aspartate and inorganic phosphate, the committed step in the de novo pyrimidine nucleotide biosynthesis pathway. The protein is Aspartate carbamoyltransferase catalytic subunit of Leptospira biflexa serovar Patoc (strain Patoc 1 / Ames).